We begin with the raw amino-acid sequence, 176 residues long: Probable inosine/xanthosine triphosphatase (176 aa).

Position 36 (Asp36) interacts with Mg(2+).

It belongs to the YjjX NTPase family. As to quaternary structure, homodimer. It depends on Mg(2+) as a cofactor. The cofactor is Mn(2+).

The catalysed reaction is XTP + H2O = XDP + phosphate + H(+). The enzyme catalyses ITP + H2O = IDP + phosphate + H(+). Phosphatase that hydrolyzes non-canonical purine nucleotides such as XTP and ITP to their respective diphosphate derivatives. Probably excludes non-canonical purines from DNA/RNA precursor pool, thus preventing their incorporation into DNA/RNA and avoiding chromosomal lesions. This chain is Probable inosine/xanthosine triphosphatase, found in Saccharolobus solfataricus (strain ATCC 35092 / DSM 1617 / JCM 11322 / P2) (Sulfolobus solfataricus).